Reading from the N-terminus, the 429-residue chain is Serine hydroxymethyltransferase (429 aa).

(6S)-5,6,7,8-tetrahydrofolate is bound by residues Leu125 and 129–131 (GHL). The residue at position 234 (Lys234) is an N6-(pyridoxal phosphate)lysine.

This sequence belongs to the SHMT family. As to quaternary structure, homodimer. The cofactor is pyridoxal 5'-phosphate.

Its subcellular location is the cytoplasm. It catalyses the reaction (6R)-5,10-methylene-5,6,7,8-tetrahydrofolate + glycine + H2O = (6S)-5,6,7,8-tetrahydrofolate + L-serine. Its pathway is one-carbon metabolism; tetrahydrofolate interconversion. The protein operates within amino-acid biosynthesis; glycine biosynthesis; glycine from L-serine: step 1/1. Functionally, catalyzes the reversible interconversion of serine and glycine with tetrahydrofolate (THF) serving as the one-carbon carrier. This reaction serves as the major source of one-carbon groups required for the biosynthesis of purines, thymidylate, methionine, and other important biomolecules. Also exhibits THF-independent aldolase activity toward beta-hydroxyamino acids, producing glycine and aldehydes, via a retro-aldol mechanism. In Allorhizobium ampelinum (strain ATCC BAA-846 / DSM 112012 / S4) (Agrobacterium vitis (strain S4)), this protein is Serine hydroxymethyltransferase.